The following is a 365-amino-acid chain: MGRTQTVLALESSCDDTAAAVLRKGATGETQVLSSIVRGQDSLHAAYGGVVPEIAARAHAEILDICVEDALQAAQTSLHDVDAIAVTAGPGLIGGVVSGVMCAKGLALATGKPLYGINHLAGHALTPRLTDNVPFPYLMLLVSGGHCQFLLIKGPDDFKRIGGTIDDAPGEAFDKIARLLALPQPGGPSVERSARQGDAKRFSLPRPLLDRPGCDMSFSGLKTAVLRVRDGLVQDQGGLYPQDQADLSAGFQAAVVDVLAEKTSRAMQQYQQLSPTTATLCVAGGVAANMAIRTRLETVARDNGAVFVAPPLALCTDNAAMIGFAALERMADHPPDDLTLAARPRWPLDSKSPAMLGSGKKGAKA.

His119 and His123 together coordinate Fe cation. Residues 141 to 145 (LVSGG), Asp174, Gly187, and Asn289 contribute to the substrate site. Residue Asp317 participates in Fe cation binding. Residues 342–365 (ARPRWPLDSKSPAMLGSGKKGAKA) form a disordered region.

The protein belongs to the KAE1 / TsaD family. It depends on Fe(2+) as a cofactor.

The protein resides in the cytoplasm. It catalyses the reaction L-threonylcarbamoyladenylate + adenosine(37) in tRNA = N(6)-L-threonylcarbamoyladenosine(37) in tRNA + AMP + H(+). Functionally, required for the formation of a threonylcarbamoyl group on adenosine at position 37 (t(6)A37) in tRNAs that read codons beginning with adenine. Is involved in the transfer of the threonylcarbamoyl moiety of threonylcarbamoyl-AMP (TC-AMP) to the N6 group of A37, together with TsaE and TsaB. TsaD likely plays a direct catalytic role in this reaction. The protein is tRNA N6-adenosine threonylcarbamoyltransferase of Roseobacter denitrificans (strain ATCC 33942 / OCh 114) (Erythrobacter sp. (strain OCh 114)).